We begin with the raw amino-acid sequence, 706 residues long: Polyribonucleotide nucleotidyltransferase (706 aa).

The Mg(2+) site is built by Asp486 and Asp492. The 60-residue stretch at Pro553–Ile612 folds into the KH domain. Residues Gly622–Lys690 form the S1 motif domain.

The protein belongs to the polyribonucleotide nucleotidyltransferase family. In terms of assembly, component of the RNA degradosome, which is a multiprotein complex involved in RNA processing and mRNA degradation. It depends on Mg(2+) as a cofactor.

The protein resides in the cytoplasm. The enzyme catalyses RNA(n+1) + phosphate = RNA(n) + a ribonucleoside 5'-diphosphate. In terms of biological role, involved in mRNA degradation. Catalyzes the phosphorolysis of single-stranded polyribonucleotides processively in the 3'- to 5'-direction. The protein is Polyribonucleotide nucleotidyltransferase of Pectobacterium carotovorum subsp. carotovorum (strain PC1).